The primary structure comprises 321 residues: Endochitinase 33 (321 aa).

The signal sequence occupies residues 1–19 (MPSLTALASLLALVPSALA). The GH18 domain maps to 27-321 (QNIAVYWGQN…FETQVVNALR (295 aa)). Residue glutamate 167 is the Proton donor of the active site.

The protein belongs to the glycosyl hydrolase 18 family. Chitinase class III subfamily. In terms of assembly, monomer.

It localises to the secreted. It carries out the reaction Random endo-hydrolysis of N-acetyl-beta-D-glucosaminide (1-&gt;4)-beta-linkages in chitin and chitodextrins.. Its function is as follows. Secreted chitinase involved in the degradation of chitin, a component of the cell walls of fungi and exoskeletal elements of some animals (including worms and arthropods). Plays a morphogenetic role during apical growth, cell division and differentiation (cell wall morphogenesis). May be involved in the degradation and further assimilation of phytopathogenic fungi, namely mycoparasitism, the major mechanism accounting for the antagonistic activity against phytopathogenic fungi displayed by Trichoderma. The chain is Endochitinase 33 (chit33) from Trichoderma harzianum (Hypocrea lixii).